The following is a 176-amino-acid chain: Oleosin Ara h 14.0103 (176 aa).

An N-acetylalanine; alternate modification is found at alanine 2. 3 helical membrane passes run 50–70 (IIAV…SGLS), 75–95 (IIGL…IVPA), and 96–116 (VVTI…GLTG). A disordered region spans residues 156 to 176 (KTKDAGQEIQTKAQDVKRSSS).

The protein belongs to the oleosin family. As to expression, expressed in seeds (at protein level).

Its subcellular location is the lipid droplet. It localises to the membrane. In terms of biological role, may have a structural role to stabilize the lipid body during desiccation of the seed by preventing coalescence of the oil. Probably interacts with both lipid and phospholipid moieties of lipid bodies. May also provide recognition signals for specific lipase anchorage in lipolysis during seedling growth. The sequence is that of Oleosin Ara h 14.0103 from Arachis hypogaea (Peanut).